Here is a 134-residue protein sequence, read N- to C-terminus: Holo-[acyl-carrier-protein] synthase (134 aa).

Positions 8 and 57 each coordinate Mg(2+).

Belongs to the P-Pant transferase superfamily. AcpS family. Mg(2+) serves as cofactor.

The protein resides in the cytoplasm. It catalyses the reaction apo-[ACP] + CoA = holo-[ACP] + adenosine 3',5'-bisphosphate + H(+). Its function is as follows. Transfers the 4'-phosphopantetheine moiety from coenzyme A to a Ser of acyl-carrier-protein. The polypeptide is Holo-[acyl-carrier-protein] synthase (Brucella abortus (strain S19)).